Reading from the N-terminus, the 370-residue chain is uncharacterized protein (370 aa).

The residue at position 1 (Met1) is an N-acetylmethionine.

It belongs to the ornithine cyclodeaminase/mu-crystallin family.

This is an uncharacterized protein from Saccharomyces cerevisiae (strain ATCC 204508 / S288c) (Baker's yeast).